The primary structure comprises 341 residues: tRNA N6-adenosine threonylcarbamoyltransferase (341 aa).

Fe cation contacts are provided by histidine 115 and histidine 119. Substrate contacts are provided by residues 138–142 (VVSGG), aspartate 171, glycine 184, aspartate 188, and asparagine 279. Residue aspartate 307 participates in Fe cation binding.

It belongs to the KAE1 / TsaD family. Requires Fe(2+) as cofactor.

It localises to the cytoplasm. It carries out the reaction L-threonylcarbamoyladenylate + adenosine(37) in tRNA = N(6)-L-threonylcarbamoyladenosine(37) in tRNA + AMP + H(+). Functionally, required for the formation of a threonylcarbamoyl group on adenosine at position 37 (t(6)A37) in tRNAs that read codons beginning with adenine. Is involved in the transfer of the threonylcarbamoyl moiety of threonylcarbamoyl-AMP (TC-AMP) to the N6 group of A37, together with TsaE and TsaB. TsaD likely plays a direct catalytic role in this reaction. The polypeptide is tRNA N6-adenosine threonylcarbamoyltransferase (Clostridium novyi (strain NT)).